Reading from the N-terminus, the 231-residue chain is Ribonuclease 3 (231 aa).

The RNase III domain maps to 5-134; the sequence is QKKLKNDYGL…FLGALFIDQG (130 aa). Glu47 provides a ligand contact to Mg(2+). Residue Asp51 is part of the active site. Mg(2+)-binding residues include Asn120 and Glu123. Residue Glu123 is part of the active site. In terms of domain architecture, DRBM spans 160–229; it reads DYKTELQEVL…AENAIKGQNH (70 aa).

Belongs to the ribonuclease III family. In terms of assembly, homodimer. Mg(2+) is required as a cofactor.

It localises to the cytoplasm. It catalyses the reaction Endonucleolytic cleavage to 5'-phosphomonoester.. Functionally, digests double-stranded RNA. Involved in the processing of primary rRNA transcript to yield the immediate precursors to the large and small rRNAs (23S and 16S). Processes some mRNAs, and tRNAs when they are encoded in the rRNA operon. Processes pre-crRNA and tracrRNA of type II CRISPR loci if present in the organism. The chain is Ribonuclease 3 from Lactococcus lactis subsp. lactis (strain IL1403) (Streptococcus lactis).